The following is a 421-amino-acid chain: D-amino acid dehydrogenase (421 aa).

3 to 17 is an FAD binding site; the sequence is VLVLGGGVVGVTSAY.

It belongs to the DadA oxidoreductase family. The cofactor is FAD.

The catalysed reaction is a D-alpha-amino acid + A + H2O = a 2-oxocarboxylate + AH2 + NH4(+). It participates in amino-acid degradation; D-alanine degradation; NH(3) and pyruvate from D-alanine: step 1/1. In terms of biological role, oxidative deamination of D-amino acids. This Methylobacterium sp. (strain 4-46) protein is D-amino acid dehydrogenase.